Here is a 434-residue protein sequence, read N- to C-terminus: Tol-Pal system protein TolB (434 aa).

The first 28 residues, 1 to 28 (MQQTCKRKIWMQISVALVTSLWMISAQA), serve as a signal peptide directing secretion.

This sequence belongs to the TolB family. The Tol-Pal system is composed of five core proteins: the inner membrane proteins TolA, TolQ and TolR, the periplasmic protein TolB and the outer membrane protein Pal. They form a network linking the inner and outer membranes and the peptidoglycan layer.

It localises to the periplasm. Its function is as follows. Part of the Tol-Pal system, which plays a role in outer membrane invagination during cell division and is important for maintaining outer membrane integrity. This is Tol-Pal system protein TolB from Alcanivorax borkumensis (strain ATCC 700651 / DSM 11573 / NCIMB 13689 / SK2).